We begin with the raw amino-acid sequence, 177 residues long: Large ribosomal subunit protein uL6 (177 aa).

It belongs to the universal ribosomal protein uL6 family. In terms of assembly, part of the 50S ribosomal subunit.

Functionally, this protein binds to the 23S rRNA, and is important in its secondary structure. It is located near the subunit interface in the base of the L7/L12 stalk, and near the tRNA binding site of the peptidyltransferase center. This Methanosarcina barkeri (strain Fusaro / DSM 804) protein is Large ribosomal subunit protein uL6.